A 246-amino-acid polypeptide reads, in one-letter code: tRNA (guanine-N(1)-)-methyltransferase (246 aa).

Residues Gly-114 and 134 to 139 (IGDYIL) each bind S-adenosyl-L-methionine. Positions 219–231 (LRRPDLWERHEGA) are enriched in basic and acidic residues. Residues 219–246 (LRRPDLWERHEGARAQSPSGARRQKKER) are disordered.

Belongs to the RNA methyltransferase TrmD family. In terms of assembly, homodimer.

It is found in the cytoplasm. The enzyme catalyses guanosine(37) in tRNA + S-adenosyl-L-methionine = N(1)-methylguanosine(37) in tRNA + S-adenosyl-L-homocysteine + H(+). Functionally, specifically methylates guanosine-37 in various tRNAs. This is tRNA (guanine-N(1)-)-methyltransferase from Rhizorhabdus wittichii (strain DSM 6014 / CCUG 31198 / JCM 15750 / NBRC 105917 / EY 4224 / RW1) (Sphingomonas wittichii).